The primary structure comprises 294 residues: Mitochondrial HMG-box protein CIM1 (294 aa).

Residues 1-90 constitute a mitochondrion transit peptide; it reads MKATLLLKAQ…RLYYASFCQS (90 aa). The HMG-box A stretch occupies residues 27–102; sequence NRTPYTAFQY…IDILNVSKIE (76 aa). The interval 110–258 is HMG-box B; sequence PIPAMSEYLL…IQILQKNMDI (149 aa).

The protein resides in the mitochondrion matrix. Functionally, mitochondrial HMG-box protein that limits the copy number of mitochondrial DNA (mtDNA), antagonizing HMG-box containing protein ABF2, a mtDNA packaging factor. The polypeptide is Mitochondrial HMG-box protein CIM1 (Saccharomyces cerevisiae (strain ATCC 204508 / S288c) (Baker's yeast)).